The primary structure comprises 438 residues: Putative truncated GMC-type inactive oxidoreductase L894 (438 aa).

The first 26 residues, 1 to 26, serve as a signal peptide directing secretion; it reads MYVFLLFSRYKIFYVYIKKMAHRSRC. 79–109 contributes to the FAD binding site; the sequence is DIVIIGAGAAGCVLAYYLTKFSDLKIILLEA.

The protein belongs to the GMC oxidoreductase family. FAD serves as cofactor.

It is found in the virion. The protein is Putative truncated GMC-type inactive oxidoreductase L894 of Acanthamoeba polyphaga (Amoeba).